Here is a 241-residue protein sequence, read N- to C-terminus: E3 ubiquitin-protein ligase RNF166 (241 aa).

Residues 8-30 form a disordered region; that stretch reads VASSQHRQHHSHQSLATPSSADS. The segment at 37–77 adopts an RING-type zinc-finger fold; sequence CPICLEVYYKPVAIGSCGHTFCGECLQPCLQVSSPLCPLCR. The Zn(2+) site is built by cysteine 102, cysteine 105, histidine 117, and cysteine 121. The segment at 102 to 121 adopts a C2HC RNF-type zinc-finger fold; it reads CRGCSKKVTLAKMRAHISSC. The UIM domain maps to 225-241; sequence DEEAALQAALALSLSEN.

The protein resides in the cytoplasm. The catalysed reaction is S-ubiquitinyl-[E2 ubiquitin-conjugating enzyme]-L-cysteine + [acceptor protein]-L-lysine = [E2 ubiquitin-conjugating enzyme]-L-cysteine + N(6)-ubiquitinyl-[acceptor protein]-L-lysine.. It functions in the pathway protein modification; protein ubiquitination. In terms of biological role, E3 ubiquitin-protein ligase that promotes the ubiquitination of different substrates. This chain is E3 ubiquitin-protein ligase RNF166 (rnf166), found in Xenopus laevis (African clawed frog).